Consider the following 284-residue polypeptide: Cuticle collagen dpy-5 (284 aa).

The interval 88-284 (GLPSQGCPAG…PCPERKRRRV (197 aa)) is disordered. 2 triple-helical region regions span residues 94–126 (CPAG…PGLN) and 143–270 (GPPG…VGAD). Over residues 106–115 (GEPGGTGPDG) the composition is skewed to gly residues. Over residues 163–177 (AGKRGTPGKDGEPGR) the composition is skewed to basic and acidic residues. Composition is skewed to low complexity over residues 181-193 (IGDQ…DGQP), 224-246 (EPGN…TGQP), and 255-271 (DGTP…GADA).

This sequence belongs to the cuticular collagen family. Collagen polypeptide chains are complexed within the cuticle by disulfide bonds and other types of covalent cross-links. May be a substrate of bli-4.

Functionally, nematode cuticles are composed largely of collagen-like proteins. The cuticle functions both as an exoskeleton and as a barrier to protect the worm from its environment. In Caenorhabditis elegans, this protein is Cuticle collagen dpy-5 (dpy-5).